A 197-amino-acid chain; its full sequence is Phosphoheptose isomerase (197 aa).

An SIS domain is found at 37–197 (MLQCLMNDGK…CIDSVLLEGM (161 aa)). 52-54 (NGG) contacts substrate. The Zn(2+) site is built by H61 and E65. Residues E65, 94-95 (ND), 120-122 (STS), S125, and Q175 each bind substrate. Positions 175 and 183 each coordinate Zn(2+).

Belongs to the SIS family. GmhA subfamily. Homotetramer. It depends on Zn(2+) as a cofactor.

The protein resides in the cytoplasm. The catalysed reaction is 2 D-sedoheptulose 7-phosphate = D-glycero-alpha-D-manno-heptose 7-phosphate + D-glycero-beta-D-manno-heptose 7-phosphate. Its pathway is carbohydrate biosynthesis; D-glycero-D-manno-heptose 7-phosphate biosynthesis; D-glycero-alpha-D-manno-heptose 7-phosphate and D-glycero-beta-D-manno-heptose 7-phosphate from sedoheptulose 7-phosphate: step 1/1. Catalyzes the isomerization of sedoheptulose 7-phosphate in D-glycero-D-manno-heptose 7-phosphate. This is Phosphoheptose isomerase from Neisseria gonorrhoeae (strain ATCC 700825 / FA 1090).